The sequence spans 452 residues: Maltoporin (452 aa).

Residues 1 to 25 form the signal peptide; the sequence is MMITLRKLPLAVAVAAGVMSAQAMA.

It belongs to the porin LamB (TC 1.B.3) family. In terms of assembly, homotrimer formed of three 18-stranded antiparallel beta-barrels, containing three independent channels.

The protein localises to the cell outer membrane. It carries out the reaction beta-maltose(in) = beta-maltose(out). In terms of biological role, involved in the transport of maltose and maltodextrins. The chain is Maltoporin from Salmonella newport (strain SL254).